The primary structure comprises 360 residues: Heme A synthase (360 aa).

Transmembrane regions (helical) follow at residues 29–49 (WLFL…ATRL), 111–131 (FLGR…WWTG), 139–159 (LGLV…WIMV), 175–195 (LAAH…LAAG), 210–230 (LTAL…GLVA), 269–289 (VALV…LALL), 309–329 (ALAG…LLAV), and 330–350 (PLWA…MAVA). Residue His-276 coordinates heme. Heme is bound at residue His-337.

This sequence belongs to the COX15/CtaA family. Type 2 subfamily. As to quaternary structure, interacts with CtaB. Requires heme b as cofactor.

The protein localises to the cell membrane. The enzyme catalyses Fe(II)-heme o + 2 A + H2O = Fe(II)-heme a + 2 AH2. It functions in the pathway porphyrin-containing compound metabolism; heme A biosynthesis; heme A from heme O: step 1/1. Catalyzes the conversion of heme O to heme A by two successive hydroxylations of the methyl group at C8. The first hydroxylation forms heme I, the second hydroxylation results in an unstable dihydroxymethyl group, which spontaneously dehydrates, resulting in the formyl group of heme A. In Methylobacterium sp. (strain 4-46), this protein is Heme A synthase.